Reading from the N-terminus, the 434-residue chain is Enolase (434 aa).

A (2R)-2-phosphoglycerate-binding site is contributed by Q165. Catalysis depends on E207, which acts as the Proton donor. Residues D244, E291, and D318 each contribute to the Mg(2+) site. Residues K343, R372, S373, and K394 each contribute to the (2R)-2-phosphoglycerate site. K343 (proton acceptor) is an active-site residue.

Belongs to the enolase family. The cofactor is Mg(2+).

Its subcellular location is the cytoplasm. It localises to the secreted. The protein resides in the cell surface. It carries out the reaction (2R)-2-phosphoglycerate = phosphoenolpyruvate + H2O. Its pathway is carbohydrate degradation; glycolysis; pyruvate from D-glyceraldehyde 3-phosphate: step 4/5. In terms of biological role, catalyzes the reversible conversion of 2-phosphoglycerate (2-PG) into phosphoenolpyruvate (PEP). It is essential for the degradation of carbohydrates via glycolysis. This chain is Enolase, found in Staphylococcus saprophyticus subsp. saprophyticus (strain ATCC 15305 / DSM 20229 / NCIMB 8711 / NCTC 7292 / S-41).